We begin with the raw amino-acid sequence, 2108 residues long: General negative regulator of transcription subunit 1 (2108 aa).

Coiled coils occupy residues Asn795–Thr813 and Met1021–Gln1046. Residues Gln1323–Gly1352 form a disordered region. Residues Lys1329–Ala1339 show a composition bias toward polar residues. Residues Gln1340–Gly1352 are compositionally biased toward low complexity. Residue Thr2102 is modified to Phosphothreonine.

The protein belongs to the CNOT1 family. In terms of assembly, forms a NOT protein complex that comprises NOT1, NOT2, NOT3, NOT4 and NOT5. Subunit of the 1.0 MDa CCR4-NOT core complex that contains CCR4, CAF1, NOT1, NOT2, NOT3, NOT4, NOT5, CAF40 and CAF130. In the complex interacts with CCR4, POP2, NOT2, NOT4 and NOT5. The core complex probably is part of a less characterized 1.9 MDa CCR4-NOT complex.

It localises to the cytoplasm. Its subcellular location is the nucleus. Its function is as follows. Acts as a component of the CCR4-NOT core complex, which in the nucleus seems to be a general transcription factor, and in the cytoplasm the major mRNA deadenylase involved in mRNA turnover. The NOT protein subcomplex negatively regulates the basal and activated transcription of many genes. Preferentially affects TC-type TATA element-dependent transcription. Could directly or indirectly inhibit component(s) of the general transcription machinery. The polypeptide is General negative regulator of transcription subunit 1 (CDC39) (Saccharomyces cerevisiae (strain ATCC 204508 / S288c) (Baker's yeast)).